A 189-amino-acid chain; its full sequence is Flavin prenyltransferase UbiX (189 aa).

Residues Gly-10 to Ser-12, Ser-37, Ser-88 to Thr-91, and Arg-123 contribute to the FMN site. The dimethylallyl phosphate site is built by Tyr-153 and Arg-169.

The protein belongs to the UbiX/PAD1 family.

The enzyme catalyses dimethylallyl phosphate + FMNH2 = prenylated FMNH2 + phosphate. It functions in the pathway cofactor biosynthesis; ubiquinone biosynthesis. Functionally, flavin prenyltransferase that catalyzes the synthesis of the prenylated FMN cofactor (prenyl-FMN) for 4-hydroxy-3-polyprenylbenzoic acid decarboxylase UbiD. The prenyltransferase is metal-independent and links a dimethylallyl moiety from dimethylallyl monophosphate (DMAP) to the flavin N5 and C6 atoms of FMN. The polypeptide is Flavin prenyltransferase UbiX (Salmonella typhi).